The chain runs to 167 residues: Caffeine dehydrogenase subunit gamma (167 aa).

In terms of domain architecture, 2Fe-2S ferredoxin-type spans 4–80 (HVISLTVNGQ…GHSIRTVEAL (77 aa)). Positions 42, 47, 50, and 62 each coordinate [2Fe-2S] cluster.

In terms of assembly, heterotrimer composed of an alpha (CdhA), a beta (CdhB) and a gamma (CdhC) subunit.

It carries out the reaction caffeine + a ubiquinone + H2O = 1,3,7-trimethylurate + a ubiquinol. The catalysed reaction is ubiquinone-0 + caffeine + H2O = ubiquinol-0 + 1,3,7-trimethylurate. The enzyme catalyses theobromine + a ubiquinone + H2O = 3,7-dimethylurate + a ubiquinol. Functionally, component of the caffeine dehydrogenase complex that catalyzes the hydrolytical oxidation of 1,3,7-trimethylxanthine (caffeine) by incorporation of an oxygen atom originating from a water molecule into position C-8 to produce 1,3,7-trimethyluric acid (TMU). Coenzyme Q0 (ubiquinone-0) is the preferred electron acceptor and, to a lesser extent, coenzyme Q2 (ubiquinone-2) can also be used, but oxygen and NAD(P)(+) cannot. Is involved in a caffeine degradation pathway that allows Pseudomonas sp. strain CBB1 to grow on caffeine as the sole carbon and nitrogen source. Is also active with theobromine as substrate, but shows a very poor activity with theophylline and is not active with xanthine, 3-methylxanthine, 7-methylxanthine, TMU, and 3,7-dimethylurate. The chain is Caffeine dehydrogenase subunit gamma from Pseudomonas sp. (strain CBB1).